The sequence spans 364 residues: Tripartite motif-containing protein 54 (364 aa).

Residues 26-82 (CPICLEMFSKPVVILPCQHNLCRKCANDVFQASNPLWQSRGSTTVSSGGRFRCPSCR) form an RING-type zinc finger. A B box-type zinc finger spans residues 121–163 (EQHLMCEEHEDEKINIYCLSCEVPTCSLCKVFGAHKDCEVAPL). C126, H129, C149, and H155 together coordinate Zn(2+). A mediates microtubule-binding and homooligomerization region spans residues 168–211 (KRQKSELSDGIAMLVAGNDRVQAVITQMEEVCQTIEDNSRRQKQ). Residues 194 to 252 (QMEEVCQTIEDNSRRQKQLLNQKFETLCAVLEERKGELLQALARVQEEKLQRVRSLIRQ) are a coiled coil. The 59-residue stretch at 271–329 (MEEPQMALYLQQAKELINKVGAMSKVELAGRPEPGYESMEQFSVIVEHVAEMLRTIDFQ) folds into the COS domain. Residues 328 to 364 (FQPGASGDEEDDEVTLDGEEGNTGLEEERLDGPEGLH) form a disordered region. Residues 334–347 (GDEEDDEVTLDGEE) show a composition bias toward acidic residues. The segment covering 353–364 (EEERLDGPEGLH) has biased composition (basic and acidic residues).

Homooligomer and heterooligomer. Interacts with TRIM63 and probably with TRIM55. Interacts with tubulin.

The protein localises to the cytoplasm. It is found in the cytoskeleton. Its subcellular location is the myofibril. The protein resides in the sarcomere. It localises to the z line. May bind and stabilize microtubules during myotubes formation. The protein is Tripartite motif-containing protein 54 (Trim54) of Rattus norvegicus (Rat).